The primary structure comprises 358 residues: tRNA (guanine(26)-N(2))-dimethyltransferase (358 aa).

Positions 5–354 (VIRREGKAVF…ATYGEVERVL (350 aa)) constitute a Trm1 methyltransferase domain. The S-adenosyl-L-methionine site is built by Arg-39, Arg-69, Asp-87, Asp-113, and Ala-114.

The protein belongs to the class I-like SAM-binding methyltransferase superfamily. Trm1 family.

The enzyme catalyses guanosine(26) in tRNA + 2 S-adenosyl-L-methionine = N(2)-dimethylguanosine(26) in tRNA + 2 S-adenosyl-L-homocysteine + 2 H(+). Dimethylates a single guanine residue at position 26 of a number of tRNAs using S-adenosyl-L-methionine as donor of the methyl groups. This is tRNA (guanine(26)-N(2))-dimethyltransferase from Pyrobaculum calidifontis (strain DSM 21063 / JCM 11548 / VA1).